Reading from the N-terminus, the 500-residue chain is ATP synthase subunit alpha (500 aa).

169–176 (GDRQTGKT) is a binding site for ATP.

It belongs to the ATPase alpha/beta chains family. In terms of assembly, F-type ATPases have 2 components, CF(1) - the catalytic core - and CF(0) - the membrane proton channel. CF(1) has five subunits: alpha(3), beta(3), gamma(1), delta(1), epsilon(1). CF(0) has three main subunits: a(1), b(2) and c(9-12). The alpha and beta chains form an alternating ring which encloses part of the gamma chain. CF(1) is attached to CF(0) by a central stalk formed by the gamma and epsilon chains, while a peripheral stalk is formed by the delta and b chains.

The protein localises to the cell membrane. It catalyses the reaction ATP + H2O + 4 H(+)(in) = ADP + phosphate + 5 H(+)(out). Functionally, produces ATP from ADP in the presence of a proton gradient across the membrane. The alpha chain is a regulatory subunit. The sequence is that of ATP synthase subunit alpha from Lactococcus lactis subsp. cremoris (strain MG1363).